The chain runs to 264 residues: E3 ubiquitin-protein ligase MARCHF8 (264 aa).

Residues 15 to 47 (LGHSVSRSSNISKAGSPTSVSAPSRFPRTSVTP) are disordered. Polar residues predominate over residues 16-47 (GHSVSRSSNISKAGSPTSVSAPSRFPRTSVTP). The RING-CH-type zinc-finger motif lies at 45 to 106 (VTPSSQDICR…ELCKFEFIME (62 aa)). Positions 53, 56, 70, 72, 80, 83, 96, and 99 each coordinate Zn(2+). The next 2 helical transmembrane spans lie at 130 to 150 (CSVT…YVLI) and 170 to 190 (FWTK…FMYV).

The protein resides in the cytoplasmic vesicle membrane. The protein localises to the lysosome membrane. It is found in the early endosome membrane. It carries out the reaction S-ubiquitinyl-[E2 ubiquitin-conjugating enzyme]-L-cysteine + [acceptor protein]-L-lysine = [E2 ubiquitin-conjugating enzyme]-L-cysteine + N(6)-ubiquitinyl-[acceptor protein]-L-lysine.. It participates in protein modification; protein ubiquitination. Its function is as follows. E3 ubiquitin-protein ligase that mediates ubiquitination of cd86 and MHC class II proteins, such as hla-dr alpha and beta, and promotes their subsequent endocytosis and sorting to lysosomes via multivesicular bodies. The protein is E3 ubiquitin-protein ligase MARCHF8 (marchf8) of Xenopus laevis (African clawed frog).